Reading from the N-terminus, the 582-residue chain is Aspartate--tRNA ligase (582 aa).

Residues Gln-198 to Lys-201 form an aspartate region. Arg-220 is an L-aspartate binding site. ATP is bound by residues Arg-220–Glu-222 and Gln-229. Position 445 (His-445) interacts with L-aspartate. Glu-479 lines the ATP pocket. Position 486 (Arg-486) interacts with L-aspartate. Gly-531–Arg-534 is an ATP binding site.

The protein belongs to the class-II aminoacyl-tRNA synthetase family. Type 1 subfamily. Homodimer.

It localises to the cytoplasm. The catalysed reaction is tRNA(Asp) + L-aspartate + ATP = L-aspartyl-tRNA(Asp) + AMP + diphosphate. Functionally, catalyzes the attachment of L-aspartate to tRNA(Asp) in a two-step reaction: L-aspartate is first activated by ATP to form Asp-AMP and then transferred to the acceptor end of tRNA(Asp). This Amoebophilus asiaticus (strain 5a2) protein is Aspartate--tRNA ligase.